A 438-amino-acid polypeptide reads, in one-letter code: MAVSEIKAKFKLNPLTKVPNFHSRRDKDLPGLLPCQLQHKERKLSPSQMRAFQDAYNFFNKDKTGCIDLHGMMCTLAKLGMNLTKHDVHNELRCADIDQDGKVNFSDFLKVLTDKNRFLKAVVPEKGTCLDLAGNPGILLFEILSKLIETSALPKKAISEIVSYFRRKFQETTSGMVWSPDTTGYGKRRFKPDICTPPSSSTAAFANAARIAIMKEKDLFKFLDELKKCNPPSDSPYSKIPIFPLFPNVDGVVMGKPFKDIQKLEMLKRKEPLNFFENYFFHKKDWKTQEANIKPVDPTSGYTTDILTIDQMLKRKQNWTVADAAAIKPHVKRATETYNLGIALEHRKQMLNLWRKIRGDLIGIESKNESFYDTFSTYTWSWNVCQELLSPKDLKLYDAHVNRNALHNSVFSSSSDISECDTDTGRKRKRKGFKGFRQ.

EF-hand domains are found at residues 47–82 (SQMR…LGMN) and 83–118 (LTKH…KNRF). Residues aspartate 96, aspartate 98, aspartate 100, lysine 102, and aspartate 107 each contribute to the Ca(2+) site. The residue at position 279 (tyrosine 279) is a Phosphotyrosine. Residues 413–438 (SSSDISECDTDTGRKRKRKGFKGFRQ) form a disordered region. Basic residues predominate over residues 426–438 (RKRKRKGFKGFRQ).

The sequence is that of EF-hand calcium-binding domain-containing protein 3 (EFCAB3) from Bos taurus (Bovine).